The following is a 337-amino-acid chain: Ycf66-like protein (337 aa).

Residues 111–337 (TEAELDQLEP…GADDQERFDY (227 aa)) form a disordered region. Positions 113–123 (AELDQLEPEDE) are enriched in acidic residues. Composition is skewed to basic and acidic residues over residues 133–143 (RGYDDDARSGR) and 253–269 (FGDR…RPYE). A compositionally biased stretch (polar residues) spans 304–316 (QSRSGNPRSQRPS).

It belongs to the ycf66 family.

The chain is Ycf66-like protein from Synechocystis sp. (strain ATCC 27184 / PCC 6803 / Kazusa).